The following is a 432-amino-acid chain: Asparagine--tRNA ligase 2 (432 aa).

This sequence belongs to the class-II aminoacyl-tRNA synthetase family. As to quaternary structure, homodimer.

It localises to the cytoplasm. It carries out the reaction tRNA(Asn) + L-asparagine + ATP = L-asparaginyl-tRNA(Asn) + AMP + diphosphate + H(+). This is Asparagine--tRNA ligase 2 (asnS2) from Lactiplantibacillus plantarum (strain ATCC BAA-793 / NCIMB 8826 / WCFS1) (Lactobacillus plantarum).